Consider the following 206-residue polypeptide: Probable peptidyl-tRNA hydrolase (206 aa).

Catalysis depends on histidine 48, which acts as the Proton acceptor. TRNA contacts are provided by tyrosine 83, asparagine 85, and asparagine 137.

It belongs to the PTH family.

It localises to the mitochondrion. The enzyme catalyses an N-acyl-L-alpha-aminoacyl-tRNA + H2O = an N-acyl-L-amino acid + a tRNA + H(+). Functionally, peptidyl-tRNA hydrolase involved in the recycling of tRNA-Lys from diacetyl-lysyl-tRNA-Lys and is important for mitochondrial function. In Schizosaccharomyces pombe (strain 972 / ATCC 24843) (Fission yeast), this protein is Probable peptidyl-tRNA hydrolase (pth1).